The primary structure comprises 347 residues: tRNA dimethylallyltransferase (347 aa).

Residue 20–27 (GPTASGKT) participates in ATP binding. Substrate is bound at residue 22–27 (TASGKT). Interaction with substrate tRNA regions lie at residues 45-48 (DSAM), 169-173 (QRLMR), and 275-280 (RCVGYR).

The protein belongs to the IPP transferase family. As to quaternary structure, monomer. The cofactor is Mg(2+).

The catalysed reaction is adenosine(37) in tRNA + dimethylallyl diphosphate = N(6)-dimethylallyladenosine(37) in tRNA + diphosphate. In terms of biological role, catalyzes the transfer of a dimethylallyl group onto the adenine at position 37 in tRNAs that read codons beginning with uridine, leading to the formation of N6-(dimethylallyl)adenosine (i(6)A). This chain is tRNA dimethylallyltransferase, found in Marinobacter nauticus (strain ATCC 700491 / DSM 11845 / VT8) (Marinobacter aquaeolei).